The chain runs to 397 residues: Acetate kinase 2 (397 aa).

Position 10 (N10) interacts with Mg(2+). K17 contributes to the ATP binding site. R90 lines the substrate pocket. D147 (proton donor/acceptor) is an active-site residue. Residues 207-211 (HLGNG), 281-283 (DCR), and 329-333 (GIGEN) each bind ATP. E383 lines the Mg(2+) pocket.

The protein belongs to the acetokinase family. Homodimer. Requires Mg(2+) as cofactor. Mn(2+) is required as a cofactor.

The protein resides in the cytoplasm. The catalysed reaction is acetate + ATP = acetyl phosphate + ADP. The protein operates within metabolic intermediate biosynthesis; acetyl-CoA biosynthesis; acetyl-CoA from acetate: step 1/2. In terms of biological role, catalyzes the formation of acetyl phosphate from acetate and ATP. Can also catalyze the reverse reaction. The protein is Acetate kinase 2 of Photobacterium profundum (strain SS9).